Reading from the N-terminus, the 288-residue chain is Dysbindin protein homolog (288 aa).

Residues 147–239 (AQLQNSSQVL…QRERQAVFDD (93 aa)) adopt a coiled-coil conformation.

The protein belongs to the dysbindin family. In terms of assembly, component of the biogenesis of lysosome-related organelles complex-1 (BLOC-1) composed of Blos1, Blos2, Blos3, Blos4, Dysb, Muted, Pldn and Snapin. Interacts with Pldn and Snapin.

Its function is as follows. Component of the biogenesis of lysosome-related organelles complex-1 (BLOC-1) involved in pigment granule biogenesis and membrane trafficking in synapses. In response to high synaptic activity at neuromuscular junctions, stabilizes Pldn protein levels and, together with Pldn, plays a role in promoting efficient synaptic vesicle recycling and re-formation through early endosomes. In Drosophila melanogaster (Fruit fly), this protein is Dysbindin protein homolog.